The chain runs to 254 residues: Leucyl/phenylalanyl-tRNA--protein transferase (254 aa).

Belongs to the L/F-transferase family.

The protein localises to the cytoplasm. The catalysed reaction is N-terminal L-lysyl-[protein] + L-leucyl-tRNA(Leu) = N-terminal L-leucyl-L-lysyl-[protein] + tRNA(Leu) + H(+). The enzyme catalyses N-terminal L-arginyl-[protein] + L-leucyl-tRNA(Leu) = N-terminal L-leucyl-L-arginyl-[protein] + tRNA(Leu) + H(+). It carries out the reaction L-phenylalanyl-tRNA(Phe) + an N-terminal L-alpha-aminoacyl-[protein] = an N-terminal L-phenylalanyl-L-alpha-aminoacyl-[protein] + tRNA(Phe). In terms of biological role, functions in the N-end rule pathway of protein degradation where it conjugates Leu, Phe and, less efficiently, Met from aminoacyl-tRNAs to the N-termini of proteins containing an N-terminal arginine or lysine. The chain is Leucyl/phenylalanyl-tRNA--protein transferase from Burkholderia multivorans (strain ATCC 17616 / 249).